A 322-amino-acid chain; its full sequence is Labrum-interacting protein from saliva LIPS-2 (322 aa).

Positions 1-20 (MKTSLPIVVLLTAVISGVHP) are cleaved as a signal peptide. Cys27 and Cys62 are disulfide-bonded. N-linked (GlcNAc...) asparagine glycosylation is found at Asn168 and Asn175. A disulfide bridge connects residues Cys249 and Cys295.

Monomer in solution. Interacts (via the N-terminal domain) with cuticular protein Cp19 (via the C-terminus). Post-translationally, proteolytically cleaved by human mast cell tryptase and chymase. Glycosylated. As to expression, female salivary gland (at protein level). Female saliva (at protein level).

The protein resides in the secreted. In terms of biological role, salivary protein that promotes mosquito blood feeding on the vertebrate host by inducing morphological changes in the mosquito labrum. Interacts with the mosquito labrum end tip and triggers salivation and probing. Modulates enzymatic activities of human tryptase and chymase. The protein is Labrum-interacting protein from saliva LIPS-2 of Aedes albopictus (Asian tiger mosquito).